We begin with the raw amino-acid sequence, 451 residues long: Trigger factor (451 aa).

The 86-residue stretch at 165-250 (DDKLTIDFEG…LRQIQAREAL (86 aa)) folds into the PPIase FKBP-type domain.

Belongs to the FKBP-type PPIase family. Tig subfamily.

It is found in the cytoplasm. The catalysed reaction is [protein]-peptidylproline (omega=180) = [protein]-peptidylproline (omega=0). Involved in protein export. Acts as a chaperone by maintaining the newly synthesized protein in an open conformation. Functions as a peptidyl-prolyl cis-trans isomerase. In Helicobacter pylori (strain Shi470), this protein is Trigger factor.